The following is a 127-amino-acid chain: UPF0212 protein VNG_1264C (127 aa).

It belongs to the UPF0212 family.

The protein is UPF0212 protein VNG_1264C of Halobacterium salinarum (strain ATCC 700922 / JCM 11081 / NRC-1) (Halobacterium halobium).